Here is a 454-residue protein sequence, read N- to C-terminus: L-serine dehydratase TdcG (454 aa).

The protein belongs to the iron-sulfur dependent L-serine dehydratase family. [4Fe-4S] cluster serves as cofactor.

It carries out the reaction L-serine = pyruvate + NH4(+). It participates in amino-acid degradation; L-threonine degradation via propanoate pathway. This chain is L-serine dehydratase TdcG (tdcG), found in Escherichia coli (strain K12).